The sequence spans 87 residues: Small ribosomal subunit protein uS15 (87 aa).

It belongs to the universal ribosomal protein uS15 family. As to quaternary structure, part of the 30S ribosomal subunit. Forms a bridge to the 50S subunit in the 70S ribosome, contacting the 23S rRNA.

One of the primary rRNA binding proteins, it binds directly to 16S rRNA where it helps nucleate assembly of the platform of the 30S subunit by binding and bridging several RNA helices of the 16S rRNA. Its function is as follows. Forms an intersubunit bridge (bridge B4) with the 23S rRNA of the 50S subunit in the ribosome. This chain is Small ribosomal subunit protein uS15, found in Dehalococcoides mccartyi (strain ATCC BAA-2266 / KCTC 15142 / 195) (Dehalococcoides ethenogenes (strain 195)).